A 224-amino-acid chain; its full sequence is Orotate phosphoribosyltransferase (224 aa).

Lysine 29 lines the 5-phospho-alpha-D-ribose 1-diphosphate pocket. Residue 37 to 38 coordinates orotate; the sequence is FF. Residues 75–76, arginine 105, lysine 106, lysine 109, histidine 111, and 130–138 each bind 5-phospho-alpha-D-ribose 1-diphosphate; these read YK and DDVITAGTS. Positions 134 and 162 each coordinate orotate.

The protein belongs to the purine/pyrimidine phosphoribosyltransferase family. PyrE subfamily. In terms of assembly, homodimer. The cofactor is Mg(2+).

It carries out the reaction orotidine 5'-phosphate + diphosphate = orotate + 5-phospho-alpha-D-ribose 1-diphosphate. Its pathway is pyrimidine metabolism; UMP biosynthesis via de novo pathway; UMP from orotate: step 1/2. Its function is as follows. Catalyzes the transfer of a ribosyl phosphate group from 5-phosphoribose 1-diphosphate to orotate, leading to the formation of orotidine monophosphate (OMP). The protein is Orotate phosphoribosyltransferase of Bordetella bronchiseptica (strain ATCC BAA-588 / NCTC 13252 / RB50) (Alcaligenes bronchisepticus).